The primary structure comprises 613 residues: Protein CER1-like 2 (613 aa).

Helical transmembrane passes span tryptophan 13 to tyrosine 33, leucine 44 to serine 64, isoleucine 95 to isoleucine 115, glycine 122 to histidine 142, leucine 182 to isoleucine 202, and tyrosine 322 to phenylalanine 342. The Fatty acid hydroxylase domain maps to valine 134–threonine 268.

It belongs to the sterol desaturase family. As to expression, not detected in any tissues.

The protein localises to the membrane. The protein is Protein CER1-like 2 of Arabidopsis thaliana (Mouse-ear cress).